Reading from the N-terminus, the 227-residue chain is PKHD-type hydroxylase M446_1130 (227 aa).

In terms of domain architecture, Fe2OG dioxygenase spans 78–178; that stretch reads QIFPPLFNRY…RVASFFWLQS (101 aa). Positions 96, 98, and 159 each coordinate Fe cation. Residue Arg-169 participates in 2-oxoglutarate binding.

Fe(2+) is required as a cofactor. Requires L-ascorbate as cofactor.

This chain is PKHD-type hydroxylase M446_1130, found in Methylobacterium sp. (strain 4-46).